Reading from the N-terminus, the 179-residue chain is ATP synthase subunit delta (179 aa).

This sequence belongs to the ATPase delta chain family. F-type ATPases have 2 components, F(1) - the catalytic core - and F(0) - the membrane proton channel. F(1) has five subunits: alpha(3), beta(3), gamma(1), delta(1), epsilon(1). F(0) has three main subunits: a(1), b(2) and c(10-14). The alpha and beta chains form an alternating ring which encloses part of the gamma chain. F(1) is attached to F(0) by a central stalk formed by the gamma and epsilon chains, while a peripheral stalk is formed by the delta and b chains.

The protein resides in the cell membrane. Functionally, f(1)F(0) ATP synthase produces ATP from ADP in the presence of a proton or sodium gradient. F-type ATPases consist of two structural domains, F(1) containing the extramembraneous catalytic core and F(0) containing the membrane proton channel, linked together by a central stalk and a peripheral stalk. During catalysis, ATP synthesis in the catalytic domain of F(1) is coupled via a rotary mechanism of the central stalk subunits to proton translocation. This protein is part of the stalk that links CF(0) to CF(1). It either transmits conformational changes from CF(0) to CF(1) or is implicated in proton conduction. In Clostridium perfringens (strain ATCC 13124 / DSM 756 / JCM 1290 / NCIMB 6125 / NCTC 8237 / Type A), this protein is ATP synthase subunit delta.